The primary structure comprises 29 residues: Neurotoxin BmK A3-6 (29 aa).

Contains 3 disulfide bonds. In terms of tissue distribution, expressed by the venom gland.

Its subcellular location is the secreted. The protein is Neurotoxin BmK A3-6 of Olivierus martensii (Manchurian scorpion).